The chain runs to 154 residues: Myoglobin (154 aa).

Residues 2-148 (GLSDGEWQLV…FRNDIAAKYK (147 aa)) form the Globin domain. S4 carries the post-translational modification Phosphoserine. H65 serves as a coordination point for nitrite. H65 serves as a coordination point for O2. T68 bears the Phosphothreonine mark. H94 contacts heme b.

It belongs to the globin family. In terms of assembly, monomeric.

The protein resides in the cytoplasm. It is found in the sarcoplasm. The enzyme catalyses Fe(III)-heme b-[protein] + nitric oxide + H2O = Fe(II)-heme b-[protein] + nitrite + 2 H(+). The catalysed reaction is H2O2 + AH2 = A + 2 H2O. Monomeric heme protein which primary function is to store oxygen and facilitate its diffusion within muscle tissues. Reversibly binds oxygen through a pentacoordinated heme iron and enables its timely and efficient release as needed during periods of heightened demand. Depending on the oxidative conditions of tissues and cells, and in addition to its ability to bind oxygen, it also has a nitrite reductase activity whereby it regulates the production of bioactive nitric oxide. Under stress conditions, like hypoxia and anoxia, it also protects cells against reactive oxygen species thanks to its pseudoperoxidase activity. This is Myoglobin (MB) from Lagostomus maximus (Plains viscacha).